The chain runs to 227 residues: Cytochrome c oxidase subunit 2 (227 aa).

The Mitochondrial intermembrane portion of the chain corresponds to 1–14; that stretch reads MAHPVQLGLQDATS. The helical transmembrane segment at 15–45 threads the bilayer; sequence PVMEELITFHDYALMTISLISFLVLYALFST. Residues 46–59 lie on the Mitochondrial matrix side of the membrane; it reads LTTKLTNTNITDAQ. The chain crosses the membrane as a helical span at residues 60–87; it reads EMETTWTILPAVILILIALPSLRILYLT. The Mitochondrial intermembrane segment spans residues 88 to 227; it reads DEINNPSFTI…IFEMGPVFTL (140 aa). Residues His161, Cys196, Glu198, Cys200, His204, and Met207 each contribute to the Cu cation site. Glu198 contacts Mg(2+).

This sequence belongs to the cytochrome c oxidase subunit 2 family. In terms of assembly, component of the cytochrome c oxidase (complex IV, CIV), a multisubunit enzyme composed of 14 subunits. The complex is composed of a catalytic core of 3 subunits MT-CO1, MT-CO2 and MT-CO3, encoded in the mitochondrial DNA, and 11 supernumerary subunits COX4I, COX5A, COX5B, COX6A, COX6B, COX6C, COX7A, COX7B, COX7C, COX8 and NDUFA4, which are encoded in the nuclear genome. The complex exists as a monomer or a dimer and forms supercomplexes (SCs) in the inner mitochondrial membrane with NADH-ubiquinone oxidoreductase (complex I, CI) and ubiquinol-cytochrome c oxidoreductase (cytochrome b-c1 complex, complex III, CIII), resulting in different assemblies (supercomplex SCI(1)III(2)IV(1) and megacomplex MCI(2)III(2)IV(2)). Found in a complex with TMEM177, COA6, COX18, COX20, SCO1 and SCO2. Interacts with TMEM177 in a COX20-dependent manner. Interacts with COX20. Interacts with COX16. Cu cation is required as a cofactor.

The protein localises to the mitochondrion inner membrane. The catalysed reaction is 4 Fe(II)-[cytochrome c] + O2 + 8 H(+)(in) = 4 Fe(III)-[cytochrome c] + 2 H2O + 4 H(+)(out). Its function is as follows. Component of the cytochrome c oxidase, the last enzyme in the mitochondrial electron transport chain which drives oxidative phosphorylation. The respiratory chain contains 3 multisubunit complexes succinate dehydrogenase (complex II, CII), ubiquinol-cytochrome c oxidoreductase (cytochrome b-c1 complex, complex III, CIII) and cytochrome c oxidase (complex IV, CIV), that cooperate to transfer electrons derived from NADH and succinate to molecular oxygen, creating an electrochemical gradient over the inner membrane that drives transmembrane transport and the ATP synthase. Cytochrome c oxidase is the component of the respiratory chain that catalyzes the reduction of oxygen to water. Electrons originating from reduced cytochrome c in the intermembrane space (IMS) are transferred via the dinuclear copper A center (CU(A)) of subunit 2 and heme A of subunit 1 to the active site in subunit 1, a binuclear center (BNC) formed by heme A3 and copper B (CU(B)). The BNC reduces molecular oxygen to 2 water molecules using 4 electrons from cytochrome c in the IMS and 4 protons from the mitochondrial matrix. This chain is Cytochrome c oxidase subunit 2 (MT-CO2), found in Chlorocebus aethiops (Green monkey).